Here is a 37-residue protein sequence, read N- to C-terminus: Large ribosomal subunit protein bL36c (37 aa).

The protein belongs to the bacterial ribosomal protein bL36 family.

It is found in the plastid. The protein resides in the chloroplast. The polypeptide is Large ribosomal subunit protein bL36c (rpl36) (Nephroselmis olivacea (Green alga)).